A 487-amino-acid polypeptide reads, in one-letter code: GTPase Der (487 aa).

Residues 2-166 (LKIAILGRPN…RIKLVANLPE (165 aa)) enclose the EngA-type G 1 domain. Residues 8-15 (GRPNVGKS), 55-59 (DTGGV), and 118-121 (NKAD) each bind GTP. Residues 165 to 194 (PEPREEEEEGLEELSVDEHEESEAALPSNT) form a disordered region. Residues 168–187 (REEEEEGLEELSVDEHEESE) show a composition bias toward acidic residues. The EngA-type G 2 domain maps to 225–398 (LKIALIGRPN…AIDELHHVVS (174 aa)). GTP is bound by residues 231 to 238 (GRPNVGKS), 278 to 282 (DTAGL), and 343 to 346 (NKWD). A KH-like domain is found at 399 to 483 (NKVPTPIVNK…PFDLEFKEKP (85 aa)).

The protein belongs to the TRAFAC class TrmE-Era-EngA-EngB-Septin-like GTPase superfamily. EngA (Der) GTPase family. In terms of assembly, associates with the 50S ribosomal subunit.

Its function is as follows. GTPase that plays an essential role in the late steps of ribosome biogenesis. This is GTPase Der from Chlamydia pneumoniae (Chlamydophila pneumoniae).